The chain runs to 354 residues: Methylthioribose-1-phosphate isomerase (354 aa).

Residues 58 to 60 (RGA), Arg101, and Gln204 each bind substrate. Asp245 (proton donor) is an active-site residue. Position 255–256 (255–256 (NK)) interacts with substrate.

The protein belongs to the eIF-2B alpha/beta/delta subunits family. MtnA subfamily.

It carries out the reaction 5-(methylsulfanyl)-alpha-D-ribose 1-phosphate = 5-(methylsulfanyl)-D-ribulose 1-phosphate. Its pathway is amino-acid biosynthesis; L-methionine biosynthesis via salvage pathway; L-methionine from S-methyl-5-thio-alpha-D-ribose 1-phosphate: step 1/6. Catalyzes the interconversion of methylthioribose-1-phosphate (MTR-1-P) into methylthioribulose-1-phosphate (MTRu-1-P). The sequence is that of Methylthioribose-1-phosphate isomerase from Xanthomonas campestris pv. campestris (strain ATCC 33913 / DSM 3586 / NCPPB 528 / LMG 568 / P 25).